The sequence spans 198 residues: Synaptobrevin homolog YKT6-B (198 aa).

The Longin domain occupies 8-127; the sequence is VLYKGENKVH…IQYNALDSYL (120 aa). The v-SNARE coiled-coil homology domain occupies 138–198; it reads PMSKVQAELD…RKQNSCCDIM (61 aa). A lipid anchor (S-palmitoyl cysteine) is attached at Cys-194. Cys-195 carries the cysteine methyl ester modification. Residue Cys-195 is the site of S-farnesyl cysteine attachment. Residues 196–198 constitute a propeptide, removed in mature form; that stretch reads DIM.

This sequence belongs to the synaptobrevin family. Post-translationally, palmitoylated; catalyzes its own palmitoylation. Palmitoylation is required for Golgi targeting. Farnesylation is required for Golgi targeting.

It localises to the cytoplasm. The protein localises to the cytosol. It is found in the cytoplasmic vesicle membrane. Its subcellular location is the golgi apparatus membrane. Vesicular soluble NSF attachment protein receptor (v-SNARE) mediating vesicle docking and fusion to a specific acceptor cellular compartment. Functions in endoplasmic reticulum to Golgi transport; as part of a SNARE complex composed of GOSR1, GOSR2 and STX5. Functions in early/recycling endosome to TGN transport; as part of a SNARE complex composed of BET1L, GOSR1 and STX5. Has a S-palmitoyl transferase activity. The protein is Synaptobrevin homolog YKT6-B (ykt6-b) of Xenopus laevis (African clawed frog).